The primary structure comprises 100 residues: Elevenin (100 aa).

The signal sequence occupies residues 1–24 (MALSQKALLVLVLSMLLTASDSWA). Residues cysteine 29 and cysteine 38 are joined by a disulfide bond. Residues 44-100 (KRGGDSLSVGGSAELDDTLTDPFLKSEEPKEWRELTRLSRVLQTFLSHPTGEMEQHD) constitute a propeptide that is removed on maturation.

This sequence belongs to the elevenin family. In terms of assembly, monomer. Expressed by the venom duct.

The protein resides in the secreted. Its function is as follows. May mimic the function of prey elevenin neuropeptide. In vivo, intracranial injection in mice induces hyperactivity. In Conus ammiralis (Admiral cone), this protein is Elevenin.